The sequence spans 372 residues: 12-oxophytodienoate reductase 1 (372 aa).

Met1 bears the N-acetylmethionine mark. FMN-binding positions include 31–33 (PLT), Ala64, and Gln106. His183 serves as a coordination point for substrate. Tyr188 acts as the Proton donor in catalysis. Arg235 is a binding site for FMN. Substrate is bound at residue Arg275. FMN contacts are provided by residues 303-305 (AGG) and 326-327 (GR).

Belongs to the NADH:flavin oxidoreductase/NADH oxidase family. FMN serves as cofactor. Mostly expressed in roots, also present in leaves, shoots and flowers. More abundant in cotyledons. In more details, expressed in peduncles, sepals, petals, around the abscission zone of siliques, maturing siliques and developing seeds.

Its subcellular location is the cytoplasm. The enzyme catalyses (1S,2S)-OPC-8 + NADP(+) = (9S,13S,15Z)-12-oxophyto-10,15-dienoate + NADPH + H(+). It participates in lipid metabolism; oxylipin biosynthesis. Specifically cleaves olefinic bonds in alpha,beta-unsaturated carbonyls and may be involved in detoxification or modification of these reactive compounds. May be involved in the biosynthesis or metabolism of oxylipin signaling molecules. In vitro, reduces 9R,13R-12-oxophytodienoic acid (9R,13R-OPDA) to 9R,13R-OPC-8:0, but only poorly 9S,13S-OPDA, the natural precursor of jasmonic acid. Can detoxify the explosive 2,4,6-trinitrotoluene (TNT) in vitro and in vivo by catalyzing its nitroreduction to form hydroxylamino-dinitrotoluene (HADNT). The polypeptide is 12-oxophytodienoate reductase 1 (Arabidopsis thaliana (Mouse-ear cress)).